We begin with the raw amino-acid sequence, 578 residues long: GPI-anchor transamidase component PIGT (578 aa).

The signal sequence occupies residues 1–21 (MAAAMPLALLVLLLLGPGGWC). Residues 22-525 (LAEPPRDSLR…NLPTPDFSMP (504 aa)) lie on the Lumenal side of the membrane. N-linked (GlcNAc...) asparagine glycosylation occurs at asparagine 164. Disulfide bonds link cysteine 195–cysteine 272 and cysteine 226–cysteine 231. Asparagine 291 and asparagine 327 each carry an N-linked (GlcNAc...) asparagine glycan. 4 residues coordinate a 2-acyl-6-[6-phosphoethanolamine-alpha-D-mannosyl-(1-&gt;2)-6-phosphoethanolamine-alpha-D-mannosyl-(1-&gt;6)-2-phosphoethanolamine-alpha-D-mannosyl-(1-&gt;4)-alpha-D-glucosaminyl]-1-(1-radyl,2-acyl-sn-glycero-3-phospho)-1D-myo-inositol: asparagine 461, aspartate 521, serine 523, and asparagine 527. A helical membrane pass occupies residues 526-548 (YNVICLTCTVVAVCYGSFYNLLT). The Cytoplasmic segment spans residues 549–578 (RTFHIEEPRTGGLAKRLANLIRRARGVPPL).

Belongs to the PIGT family. As to quaternary structure, heteropentamer. Part of the GPI-anchor transamidase complex, consisting of PIGK, PIGT, PIGS, PIGU and GAA1. Post-translationally, the disulfide bond between PIGK/GPI8 and PIGT is important for normal enzyme activity.

The protein resides in the endoplasmic reticulum membrane. It functions in the pathway glycolipid biosynthesis; glycosylphosphatidylinositol-anchor biosynthesis. Its function is as follows. Component of the glycosylphosphatidylinositol-anchor (GPI-anchor) transamidase (GPI-T) complex that catalyzes the formation of the linkage between a proprotein and a GPI-anchor and participates in GPI anchored protein biosynthesis. May play a crucial role in GPI-T complex assembly in the luminal layer. Binds GPI-anchor. This chain is GPI-anchor transamidase component PIGT, found in Homo sapiens (Human).